We begin with the raw amino-acid sequence, 680 residues long: DNA-directed RNA polymerase subunit beta' (680 aa).

C69, C71, C87, and C90 together coordinate Zn(2+). Mg(2+)-binding residues include D489, D491, and D493.

This sequence belongs to the RNA polymerase beta' chain family. RpoC1 subfamily. In plastids the minimal PEP RNA polymerase catalytic core is composed of four subunits: alpha, beta, beta', and beta''. When a (nuclear-encoded) sigma factor is associated with the core the holoenzyme is formed, which can initiate transcription. Requires Mg(2+) as cofactor. It depends on Zn(2+) as a cofactor.

It is found in the plastid. The protein resides in the chloroplast. It catalyses the reaction RNA(n) + a ribonucleoside 5'-triphosphate = RNA(n+1) + diphosphate. DNA-dependent RNA polymerase catalyzes the transcription of DNA into RNA using the four ribonucleoside triphosphates as substrates. The chain is DNA-directed RNA polymerase subunit beta' from Aethionema grandiflorum (Persian stone-cress).